We begin with the raw amino-acid sequence, 188 residues long: Elongation factor P (188 aa).

K34 carries the N6-(3,6-diaminohexanoyl)-5-hydroxylysine modification.

The protein belongs to the elongation factor P family. Post-translationally, may be beta-lysylated on the epsilon-amino group of Lys-34 by the combined action of EpmA and EpmB, and then hydroxylated on the C5 position of the same residue by EpmC (if this protein is present). Lysylation is critical for the stimulatory effect of EF-P on peptide-bond formation. The lysylation moiety may extend toward the peptidyltransferase center and stabilize the terminal 3-CCA end of the tRNA. Hydroxylation of the C5 position on Lys-34 may allow additional potential stabilizing hydrogen-bond interactions with the P-tRNA.

The protein localises to the cytoplasm. It functions in the pathway protein biosynthesis; polypeptide chain elongation. Functionally, involved in peptide bond synthesis. Alleviates ribosome stalling that occurs when 3 or more consecutive Pro residues or the sequence PPG is present in a protein, possibly by augmenting the peptidyl transferase activity of the ribosome. Modification of Lys-34 is required for alleviation. This Citrobacter koseri (strain ATCC BAA-895 / CDC 4225-83 / SGSC4696) protein is Elongation factor P.